Reading from the N-terminus, the 338-residue chain is Cell division protein ZipA (338 aa).

At 1–2 the chain is on the periplasmic side; sequence MS. A helical membrane pass occupies residues 3–23; it reads LREWLIAIGTLVIIGIVIDGV. At 24–338 the chain is on the cytoplasmic side; it reads RRMRRARKES…FERKQRSQRA (315 aa). The tract at residues 33–192 is disordered; it reads SMAISSGMGA…RKNQPLAGAN (160 aa). 2 stretches are compositionally biased toward basic and acidic residues: residues 70-81 and 138-162; these read TLEDRGYLKRDM and EVDR…RAEE.

This sequence belongs to the ZipA family. Interacts with FtsZ via their C-terminal domains.

Its subcellular location is the cell inner membrane. Its function is as follows. Essential cell division protein that stabilizes the FtsZ protofilaments by cross-linking them and that serves as a cytoplasmic membrane anchor for the Z ring. Also required for the recruitment to the septal ring of downstream cell division proteins. In Marinobacter nauticus (strain ATCC 700491 / DSM 11845 / VT8) (Marinobacter aquaeolei), this protein is Cell division protein ZipA.